A 792-amino-acid chain; its full sequence is Ribonucleoside-diphosphate reductase large subunit (792 aa).

Residues Thr-200, 215 to 216 (SC), Gly-246, 415 to 419 (NLCAE), and 606 to 610 (PTAGT) contribute to the substrate site. The cysteines at positions 216 and 431 are disulfide-linked. Asn-415 functions as the Proton acceptor in the catalytic mechanism. Cys-417 acts as the Cysteine radical intermediate in catalysis. The Proton acceptor role is filled by Glu-419. A disordered region spans residues 758–781 (SPPHSGMKQDGAWLPGPKNPEEES).

The protein belongs to the ribonucleoside diphosphate reductase large chain family. Heterotetramer composed of a homodimer of the large subunit (R1) and a homodimer of the small subunit (R2). Larger multisubunit protein complex are also active, composed of (R1)n(R2)n.

It carries out the reaction a 2'-deoxyribonucleoside 5'-diphosphate + [thioredoxin]-disulfide + H2O = a ribonucleoside 5'-diphosphate + [thioredoxin]-dithiol. Functionally, ribonucleoside-diphosphate reductase holoenzyme provides the precursors necessary for viral DNA synthesis. Allows virus growth in non-dividing cells, as well as reactivation from latency in infected hosts. Catalyzes the biosynthesis of deoxyribonucleotides from the corresponding ribonucleotides. The polypeptide is Ribonucleoside-diphosphate reductase large subunit (Human herpesvirus 8 type P (isolate GK18) (HHV-8)).